The chain runs to 388 residues: Dauer abnormal formation protein 25 (388 aa).

ANK repeat units follow at residues S40 to D69, T74 to L103, and I107 to E137. C321, C324, C333, C336, C341, C345, H353, and C357 together coordinate Zn(2+). The segment at C321 to C357 adopts an MYND-type zinc-finger fold.

Expressed in many ciliated sensory neurons.

It is found in the cell projection. The protein localises to the cilium. In terms of biological role, may be involved in the trafficking and dendritic transport of signaling proteins, such as the receptor-type guanylate cyclases gcy-12 and daf-11, to the cilia. In ciliated sensory neurons, required for the calcium flux to the cytoplasm in response to onset and removal of a nitric oxide (NO) stimulus and is thereby required for the behavioral avoidance response to NO-producing organisms like P.aeruginosa. This is Dauer abnormal formation protein 25 (daf-25) from Caenorhabditis elegans.